The chain runs to 34 residues: Photosystem II reaction center protein Psb30 (34 aa).

Residues 9–29 form a helical membrane-spanning segment; that stretch reads QLIATGTIMLAGPAVIVLLAL.

The protein belongs to the Psb30/Ycf12 family. PSII is composed of 1 copy each of membrane proteins PsbA, PsbB, PsbC, PsbD, PsbE, PsbF, PsbH, PsbI, PsbJ, PsbK, PsbL, PsbM, PsbT, PsbX, PsbY, PsbZ, Psb30/Ycf12, peripheral proteins of the oxygen-evolving complex and a large number of cofactors. It forms dimeric complexes.

It is found in the plastid. Its subcellular location is the chloroplast thylakoid membrane. Functionally, a core subunit of photosystem II (PSII), probably helps stabilize the reaction center. The protein is Photosystem II reaction center protein Psb30 of Phaeodactylum tricornutum (strain CCAP 1055/1).